Consider the following 92-residue polypeptide: Muconolactone Delta-isomerase (92 aa).

The protein belongs to the muconolactone Delta-isomerase family. In terms of assembly, homodecamer.

It carries out the reaction (S)-muconolactone = (4,5-dihydro-5-oxofuran-2-yl)-acetate. It participates in aromatic compound metabolism; beta-ketoadipate pathway; 5-oxo-4,5-dihydro-2-furylacetate from catechol: step 3/3. This Cupriavidus pinatubonensis (strain JMP 134 / LMG 1197) (Cupriavidus necator (strain JMP 134)) protein is Muconolactone Delta-isomerase (catC).